Reading from the N-terminus, the 267-residue chain is 4-hydroxy-tetrahydrodipicolinate reductase (267 aa).

NAD(+) is bound by residues 8–13 (GAAGRM) and glutamate 34. Arginine 35 is an NADP(+) binding site. Residues 98–100 (GST) and 122–125 (APNM) each bind NAD(+). Catalysis depends on histidine 155, which acts as the Proton donor/acceptor. Histidine 156 provides a ligand contact to (S)-2,3,4,5-tetrahydrodipicolinate. Lysine 159 functions as the Proton donor in the catalytic mechanism. 165 to 166 (GT) contacts (S)-2,3,4,5-tetrahydrodipicolinate.

The protein belongs to the DapB family.

It localises to the cytoplasm. The catalysed reaction is (S)-2,3,4,5-tetrahydrodipicolinate + NAD(+) + H2O = (2S,4S)-4-hydroxy-2,3,4,5-tetrahydrodipicolinate + NADH + H(+). It carries out the reaction (S)-2,3,4,5-tetrahydrodipicolinate + NADP(+) + H2O = (2S,4S)-4-hydroxy-2,3,4,5-tetrahydrodipicolinate + NADPH + H(+). It participates in amino-acid biosynthesis; L-lysine biosynthesis via DAP pathway; (S)-tetrahydrodipicolinate from L-aspartate: step 4/4. Functionally, catalyzes the conversion of 4-hydroxy-tetrahydrodipicolinate (HTPA) to tetrahydrodipicolinate. The protein is 4-hydroxy-tetrahydrodipicolinate reductase of Pelobacter propionicus (strain DSM 2379 / NBRC 103807 / OttBd1).